The chain runs to 164 residues: Peptidyl-prolyl cis-trans isomerase CYP18-2 (164 aa).

The region spanning 12 to 162 is the PPIase cyclophilin-type domain; it reads VTLETSMGPF…HEVKILRTKV (151 aa).

It belongs to the cyclophilin-type PPIase family. Ubiquitous.

It is found in the cytoplasm. The catalysed reaction is [protein]-peptidylproline (omega=180) = [protein]-peptidylproline (omega=0). In terms of biological role, PPIases accelerate the folding of proteins. It catalyzes the cis-trans isomerization of proline imidic peptide bonds in oligopeptides. The sequence is that of Peptidyl-prolyl cis-trans isomerase CYP18-2 (CYP18-2) from Arabidopsis thaliana (Mouse-ear cress).